Consider the following 376-residue polypeptide: Aminomethyltransferase (376 aa).

The protein belongs to the GcvT family. The glycine cleavage system is composed of four proteins: P, T, L and H.

The enzyme catalyses N(6)-[(R)-S(8)-aminomethyldihydrolipoyl]-L-lysyl-[protein] + (6S)-5,6,7,8-tetrahydrofolate = N(6)-[(R)-dihydrolipoyl]-L-lysyl-[protein] + (6R)-5,10-methylene-5,6,7,8-tetrahydrofolate + NH4(+). Functionally, the glycine cleavage system catalyzes the degradation of glycine. This is Aminomethyltransferase from Nostoc sp. (strain PCC 7120 / SAG 25.82 / UTEX 2576).